The primary structure comprises 154 residues: Superoxide dismutase [Cu-Zn] (154 aa).

Residues His-47, His-49, and His-64 each coordinate Cu cation. A disulfide bond links Cys-58 and Cys-147. Zn(2+) is bound by residues His-64, His-72, His-81, and Asp-84. A Cu cation-binding site is contributed by His-121. The interval 122-143 (GGTDDLGKGGNEESLKTGNAGP) is disordered. The segment covering 123 to 136 (GTDDLGKGGNEESL) has biased composition (basic and acidic residues). Arg-144 is a binding site for substrate.

The protein belongs to the Cu-Zn superoxide dismutase family. Homodimer. Cu cation is required as a cofactor. Zn(2+) serves as cofactor.

Its subcellular location is the cytoplasm. The catalysed reaction is 2 superoxide + 2 H(+) = H2O2 + O2. In terms of biological role, destroys radicals which are normally produced within the cells and which are toxic to biological systems. This Cordyceps militaris (Caterpillar fungus) protein is Superoxide dismutase [Cu-Zn] (SOD1).